We begin with the raw amino-acid sequence, 167 residues long: Small ribosomal subunit protein uS5 (167 aa).

The region spanning 11–74 (LQEKLIAVNR…DKARRNMTTI (64 aa)) is the S5 DRBM domain.

Belongs to the universal ribosomal protein uS5 family. As to quaternary structure, part of the 30S ribosomal subunit. Contacts proteins S4 and S8.

Its function is as follows. With S4 and S12 plays an important role in translational accuracy. In terms of biological role, located at the back of the 30S subunit body where it stabilizes the conformation of the head with respect to the body. The chain is Small ribosomal subunit protein uS5 from Baumannia cicadellinicola subsp. Homalodisca coagulata.